Reading from the N-terminus, the 466-residue chain is Vacuolar-processing enzyme delta-isozyme (466 aa).

A signal peptide spans 1–24 (MSSPLGHFQILVFLHALLIFSAES). Asparagine 137 carries N-linked (GlcNAc...) asparagine glycosylation. The active site involves histidine 164. Cysteine 206 functions as the Nucleophile in the catalytic mechanism. A disulfide bond links cysteine 239 and cysteine 253. The N-linked (GlcNAc...) asparagine glycan is linked to asparagine 322. Disulfide bonds link cysteine 417-cysteine 447 and cysteine 429-cysteine 464.

Belongs to the peptidase C13 family. In terms of processing, auto-catalytic activation. As to expression, seed specific. Restricted to developing seeds at 7 days after anthesis, and, at lower levels, detected in flowers. Detected in siliques, specifically in seed coats (at protein level).

The protein resides in the secreted. The protein localises to the extracellular space. Its subcellular location is the cell wall. It localises to the vacuole. The catalysed reaction is Hydrolysis of proteins and small molecule substrates at -Asn-|-Xaa- bonds.. Its activity is regulated as follows. Strongly inhibited by biotin-YVAD-fmk (a caspase-1 inhibitor) and by Ac-DEVD-fmk. Its function is as follows. Asparagine-specific endopeptidase that may be involved in processing of proteins targeted to vacuoles. Probably involved in post-translational proteolysis of seed storage proteins in the protein storage vacuole of developing seeds. Exhibits a caspase-1-like activity in extracellular granules. At the early stage of seed development, required for the formation of the seed coat, by regulating cell death of specific cell layers in inner integument. This Arabidopsis thaliana (Mouse-ear cress) protein is Vacuolar-processing enzyme delta-isozyme.